A 138-amino-acid polypeptide reads, in one-letter code: ATP synthase epsilon chain 1 (138 aa).

The protein belongs to the ATPase epsilon chain family. As to quaternary structure, F-type ATPases have 2 components, CF(1) - the catalytic core - and CF(0) - the membrane proton channel. CF(1) has five subunits: alpha(3), beta(3), gamma(1), delta(1), epsilon(1). CF(0) has three main subunits: a, b and c.

The protein localises to the cell inner membrane. Its function is as follows. Produces ATP from ADP in the presence of a proton gradient across the membrane. This Syntrophotalea carbinolica (strain DSM 2380 / NBRC 103641 / GraBd1) (Pelobacter carbinolicus) protein is ATP synthase epsilon chain 1.